Consider the following 251-residue polypeptide: Triosephosphate isomerase (251 aa).

Residue Asn10 to Lys12 coordinates substrate. His99 serves as the catalytic Electrophile. Glu167 functions as the Proton acceptor in the catalytic mechanism. Residues Gly173, Ser211, and Gly232–Gly233 each bind substrate.

It belongs to the triosephosphate isomerase family. In terms of assembly, homodimer.

It localises to the cytoplasm. The enzyme catalyses D-glyceraldehyde 3-phosphate = dihydroxyacetone phosphate. It functions in the pathway carbohydrate biosynthesis; gluconeogenesis. It participates in carbohydrate degradation; glycolysis; D-glyceraldehyde 3-phosphate from glycerone phosphate: step 1/1. Its function is as follows. Involved in the gluconeogenesis. Catalyzes stereospecifically the conversion of dihydroxyacetone phosphate (DHAP) to D-glyceraldehyde-3-phosphate (G3P). The sequence is that of Triosephosphate isomerase from Neisseria meningitidis serogroup A / serotype 4A (strain DSM 15465 / Z2491).